The primary structure comprises 511 residues: Glucans biosynthesis protein G (511 aa).

The N-terminal stretch at 1-22 (MMKMRWLSAAVMLTLYTSSSWA) is a signal peptide.

This sequence belongs to the OpgD/OpgG family.

The protein localises to the periplasm. Its pathway is glycan metabolism; osmoregulated periplasmic glucan (OPG) biosynthesis. Functionally, involved in the biosynthesis of osmoregulated periplasmic glucans (OPGs). The sequence is that of Glucans biosynthesis protein G from Escherichia coli O81 (strain ED1a).